The primary structure comprises 92 residues: DNA-binding protein HU (92 aa).

Belongs to the bacterial histone-like protein family. Homodimer.

Functionally, histone-like DNA-binding protein which is capable of wrapping DNA to stabilize it, and thus to prevent its denaturation under extreme environmental conditions. This Buchnera aphidicola subsp. Acyrthosiphon pisum (strain APS) (Acyrthosiphon pisum symbiotic bacterium) protein is DNA-binding protein HU (hup).